Reading from the N-terminus, the 494-residue chain is Glycosyl hydrolase family 109 protein (494 aa).

The tract at residues 1 to 32 (MNDDARPAPEPQDIPPHSGAADEVNRQDPSRR) is disordered. The tat-type signal signal peptide spans 1-58 (MNDDARPAPEPQDIPPHSGAADEVNRQDPSRRSVLWTTAGVAGAGLGLGALGAGTASA). NAD(+) is bound by residues 104 to 105 (NR), D126, 175 to 178 (WELH), 195 to 196 (EC), and N224. Residues Y253, R272, 284–287 (YPNH), and Y366 contribute to the substrate site. Y284 contacts NAD(+).

It belongs to the Gfo/Idh/MocA family. Glycosyl hydrolase 109 subfamily. It depends on NAD(+) as a cofactor. Post-translationally, predicted to be exported by the Tat system. The position of the signal peptide cleavage has not been experimentally proven.

Glycosidase. The protein is Glycosyl hydrolase family 109 protein of Streptomyces filamentosus (Streptomyces roseosporus).